A 568-amino-acid polypeptide reads, in one-letter code: Protein OCTOPUS-like (568 aa).

Disordered regions lie at residues 1 to 27 (MNLS…RLST), 78 to 99 (LFKP…RPGF), 168 to 203 (EEAE…ELKP), 242 to 276 (QKQK…PRFS), 360 to 428 (PGGS…DKKS), 446 to 512 (DDEE…SKDG), and 526 to 558 (RSWK…SHGH). A compositionally biased stretch (low complexity) spans 82 to 93 (SSSGTNNSNGNG). The span at 168–179 (EEAEIEEDEENG) shows a compositional bias: acidic residues. Positions 180–193 (EKDPGEIVEEKSSE) are enriched in basic and acidic residues. Residue S260 is modified to Phosphoserine. Residues 400–423 (SVSNSTTTIDSNSMETAENKGNQN) show a composition bias toward polar residues. Residues 532–546 (GGSGGGGGGGGGGGW) show a composition bias toward gly residues.

Belongs to the OCTOPUS family. In terms of processing, phosphorylation at Ser-260 amplifies the promotion of protophloem differentiation.

The protein localises to the cell membrane. It is found in the cytoplasm. Functionally, potentiates primary root protophloem differentiation. Regulates roots architecture. The polypeptide is Protein OCTOPUS-like (Arabidopsis thaliana (Mouse-ear cress)).